A 356-amino-acid chain; its full sequence is Histidinol-phosphate aminotransferase (356 aa).

Residue K214 is modified to N6-(pyridoxal phosphate)lysine.

Belongs to the class-II pyridoxal-phosphate-dependent aminotransferase family. Histidinol-phosphate aminotransferase subfamily. In terms of assembly, homodimer. It depends on pyridoxal 5'-phosphate as a cofactor.

It catalyses the reaction L-histidinol phosphate + 2-oxoglutarate = 3-(imidazol-4-yl)-2-oxopropyl phosphate + L-glutamate. The protein operates within amino-acid biosynthesis; L-histidine biosynthesis; L-histidine from 5-phospho-alpha-D-ribose 1-diphosphate: step 7/9. The protein is Histidinol-phosphate aminotransferase of Escherichia coli O81 (strain ED1a).